Consider the following 200-residue polypeptide: Early E1A 21 kDa protein (200 aa).

Residues 78–98 (QDSTTATSAEEPSASTDSISS) form a disordered region. The LXCXE motif, interaction with host RB1 signature appears at 114 to 118 (LRCYE). A zinc finger spans residues 136-151 (CSTCGGHEVNGFCSLC). Residues 196–200 (SRHDE) carry the Nuclear localization signal motif.

In terms of assembly, interaction with host RB1 induces the aberrant dissociation of RB1-E2F1 complex thereby disrupting RB1's activity.

Its function is as follows. E1A protein has both transforming and trans-activating activities. Plays a role in viral genome replication by driving entry of quiescent cells into the cell cycle. Disrupts the function of host retinoblastoma protein RB1/pRb and isoform early E1A 26 kDa protein stabilizes TP53, which are key regulators of the cell cycle. Induces the disassembly of the E2F1 transcription factors from RB1 by direct competition for the same binding site on RB1, with subsequent transcriptional activation of E2F1-regulated S-phase genes. Inactivation of the ability of RB1 to arrest the cell cycle is critical for cellular transformation, uncontrolled cellular growth and proliferation induced by viral infection. Stimulation of progression from G1 to S phase allows the virus to efficiently use the cellular DNA replicating machinery to achieve viral genome replication. The polypeptide is Early E1A 21 kDa protein (Murine adenovirus A serotype 1 (MAdV-1)).